Reading from the N-terminus, the 302-residue chain is MALSSSSHLLPFSRPPATFPRARHAGGGRGRAGATGRFIACSSPPPPDVVVTRERGKNAKLIAALEKHNVQSLELPLIKHVEGPDTDRLSAVLRDEKFDWITITSPEAAAVFLEGWKAAGNPKVRIAVVGAGTERVFDEVIQYNDGSLEVAFSPSKAMGKFLASELPRTTETTCKVLYPASAKAGHEIQNGLSNRGFEVTRLNTYTTVSVQDVDPLILKPALSAPVVAVASPSALRAWLNLASQVDNWGNAIACIGETTASAAKKFGLKSIYYPTTPGLDGWVESILEALRAHGQSKEAPGC.

The tract at residues Met-1 to Ile-39 is disordered. The N-terminal 50 residues, Met-1–Val-50, are a transit peptide targeting the chloroplast.

The protein belongs to the uroporphyrinogen-III synthase family.

Its subcellular location is the plastid. It localises to the chloroplast. It catalyses the reaction hydroxymethylbilane = uroporphyrinogen III + H2O. It participates in porphyrin-containing compound metabolism; protoporphyrin-IX biosynthesis; coproporphyrinogen-III from 5-aminolevulinate: step 3/4. Catalyzes cyclization of the linear tetrapyrrole, hydroxymethylbilane, to the macrocyclic uroporphyrinogen III, a precursor of tetrapyrroles such as chlorophyll, heme and phycobilins. The polypeptide is Uroporphyrinogen-III synthase, chloroplastic (UROS) (Oryza sativa subsp. japonica (Rice)).